Reading from the N-terminus, the 453-residue chain is tRNA-2-methylthio-N(6)-dimethylallyladenosine synthase (453 aa).

The MTTase N-terminal domain maps to 21–137 (RGVYISTYGC…LPQLVAKSFA (117 aa)). [4Fe-4S] cluster-binding residues include cysteine 30, cysteine 66, cysteine 100, cysteine 174, cysteine 178, and cysteine 181. Positions 160 to 389 (RNPGVATYVN…FDVHEAMAFE (230 aa)) constitute a Radical SAM core domain. Positions 392–453 (KRYEGTTMKV…FPAVFRGEMI (62 aa)) constitute a TRAM domain.

This sequence belongs to the methylthiotransferase family. MiaB subfamily. Monomer. [4Fe-4S] cluster is required as a cofactor.

It localises to the cytoplasm. It catalyses the reaction N(6)-dimethylallyladenosine(37) in tRNA + (sulfur carrier)-SH + AH2 + 2 S-adenosyl-L-methionine = 2-methylsulfanyl-N(6)-dimethylallyladenosine(37) in tRNA + (sulfur carrier)-H + 5'-deoxyadenosine + L-methionine + A + S-adenosyl-L-homocysteine + 2 H(+). In terms of biological role, catalyzes the methylthiolation of N6-(dimethylallyl)adenosine (i(6)A), leading to the formation of 2-methylthio-N6-(dimethylallyl)adenosine (ms(2)i(6)A) at position 37 in tRNAs that read codons beginning with uridine. This Bdellovibrio bacteriovorus (strain ATCC 15356 / DSM 50701 / NCIMB 9529 / HD100) protein is tRNA-2-methylthio-N(6)-dimethylallyladenosine synthase.